Reading from the N-terminus, the 216-residue chain is Kynurenine formamidase (216 aa).

Trp25 provides a ligand contact to substrate. Zn(2+)-binding residues include His55, His59, and Asp61. The Proton donor/acceptor role is filled by His65. 2 residues coordinate Zn(2+): His167 and Glu179.

This sequence belongs to the Cyclase 1 superfamily. KynB family. In terms of assembly, homodimer. Zn(2+) is required as a cofactor.

The enzyme catalyses N-formyl-L-kynurenine + H2O = L-kynurenine + formate + H(+). The protein operates within amino-acid degradation; L-tryptophan degradation via kynurenine pathway; L-kynurenine from L-tryptophan: step 2/2. In terms of biological role, catalyzes the hydrolysis of N-formyl-L-kynurenine to L-kynurenine, the second step in the kynurenine pathway of tryptophan degradation. The polypeptide is Kynurenine formamidase (Cupriavidus taiwanensis (strain DSM 17343 / BCRC 17206 / CCUG 44338 / CIP 107171 / LMG 19424 / R1) (Ralstonia taiwanensis (strain LMG 19424))).